A 496-amino-acid chain; its full sequence is Myotilin (496 aa).

The tract at residues 1–37 (MFNYERPKHFIQPQNPCGSRLQPPGPEVSGFPSQTKQ) is disordered. Arginine 20 is modified (omega-N-methylarginine). The segment at 78–149 (PNPGQKVTAT…PTPKTPDHEI (72 aa)) is necessary for interaction with ACTN1. Polar residues-rich tracts occupy residues 202–213 (NSDVQDSPQHNP) and 221–233 (PTSQ…SSRA). The interval 202–239 (NSDVQDSPQHNPEQARLHVPTSQVRSRSSSRAEANDQD) is disordered. The necessary for interaction with FLNC stretch occupies residues 213–491 (PEQARLHVPT…QRLAAQSGLY (279 aa)). The necessary for interaction with ACTA1 stretch occupies residues 213-496 (PEQARLHVPT…QSGLYESEEL (284 aa)). Ig-like C2-type domains follow at residues 248–333 (PRFI…ATFT) and 347–439 (PMFI…LDVT).

This sequence belongs to the myotilin/palladin family. In terms of assembly, homodimer. Interacts with ACTA1, ACTN1, FLNA, FLNB, FLNC, and MYOZ2. Interacts with the C-terminal region of MYOZ1. Expressed in skeletal muscle (at protein level).

It localises to the cell membrane. It is found in the sarcolemma. Its subcellular location is the cytoplasm. The protein localises to the cytoskeleton. The protein resides in the myofibril. It localises to the sarcomere. It is found in the z line. In terms of biological role, component of a complex of multiple actin cross-linking proteins. Involved in the control of myofibril assembly and stability at the Z lines in muscle cells. The protein is Myotilin (Myot) of Mus musculus (Mouse).